A 67-amino-acid polypeptide reads, in one-letter code: Conotoxin ArMLCL-012 (67 aa).

The N-terminal stretch at 1–19 (MLCLPVFIILLLLASPAAS) is a signal peptide. A propeptide spanning residues 20–45 (NPLEKRIQSDLIRAALEDADTKNDPR) is cleaved from the precursor. Cys64 is subject to Cysteine amide.

Belongs to the conotoxin T superfamily. In terms of processing, contains 2 disulfide bonds that can be either 'C1-C3, C2-C4' or 'C1-C4, C2-C3', since these disulfide connectivities have been observed for conotoxins with cysteine framework V (for examples, see AC P0DQQ7 and AC P81755). As to expression, expressed by the venom duct.

The protein localises to the secreted. The polypeptide is Conotoxin ArMLCL-012 (Conus arenatus (Sand-dusted cone)).